The chain runs to 49 residues: Small integral membrane protein 27 (49 aa).

A helical transmembrane segment spans residues 11–31 (WTYSLLLLAIVLLSWGFVIYA).

The protein resides in the membrane. The sequence is that of Small integral membrane protein 27 from Mus musculus (Mouse).